The following is a 163-amino-acid chain: NADH-quinone oxidoreductase subunit I (163 aa).

4Fe-4S ferredoxin-type domains lie at 53-83 (LRRYPNGEERCIACKLCEAICPAQAITIEAG) and 94-123 (VRYDIDMVKCIYCGFCQEACPVEAIVEGPN). Cys63, Cys66, Cys69, Cys73, Cys103, Cys106, Cys109, and Cys113 together coordinate [4Fe-4S] cluster.

Belongs to the complex I 23 kDa subunit family. As to quaternary structure, NDH-1 is composed of 14 different subunits. Subunits NuoA, H, J, K, L, M, N constitute the membrane sector of the complex. Requires [4Fe-4S] cluster as cofactor.

The protein localises to the cell inner membrane. It carries out the reaction a quinone + NADH + 5 H(+)(in) = a quinol + NAD(+) + 4 H(+)(out). Its function is as follows. NDH-1 shuttles electrons from NADH, via FMN and iron-sulfur (Fe-S) centers, to quinones in the respiratory chain. The immediate electron acceptor for the enzyme in this species is believed to be ubiquinone. Couples the redox reaction to proton translocation (for every two electrons transferred, four hydrogen ions are translocated across the cytoplasmic membrane), and thus conserves the redox energy in a proton gradient. The sequence is that of NADH-quinone oxidoreductase subunit I from Bartonella quintana (strain Toulouse) (Rochalimaea quintana).